We begin with the raw amino-acid sequence, 295 residues long: Bifunctional protein FolD (295 aa).

NADP(+) is bound by residues 169–171 (GRS), Ser194, and Ile235.

This sequence belongs to the tetrahydrofolate dehydrogenase/cyclohydrolase family. Homodimer.

The catalysed reaction is (6R)-5,10-methylene-5,6,7,8-tetrahydrofolate + NADP(+) = (6R)-5,10-methenyltetrahydrofolate + NADPH. It catalyses the reaction (6R)-5,10-methenyltetrahydrofolate + H2O = (6R)-10-formyltetrahydrofolate + H(+). It participates in one-carbon metabolism; tetrahydrofolate interconversion. Functionally, catalyzes the oxidation of 5,10-methylenetetrahydrofolate to 5,10-methenyltetrahydrofolate and then the hydrolysis of 5,10-methenyltetrahydrofolate to 10-formyltetrahydrofolate. The sequence is that of Bifunctional protein FolD from Acaryochloris marina (strain MBIC 11017).